The sequence spans 72 residues: Bradykinin-potentiating peptide BmKbpp (72 aa).

A signal peptide spans 1 to 22 (MNKKTLLVIFFVTMLIVDEVNS). A propeptide spanning residues 70–72 (RRR) is cleaved from the precursor.

It belongs to the non-disulfide-bridged peptide (NDBP) superfamily. Long chain multifunctional peptide (group 2) family. Expressed by the venom gland.

The protein resides in the secreted. Amphipathic peptide that shows bradykinin potentiating activity and antimicrobial activities against bacteria and fungi. Has higher antibacterial activities against Gram-negative than against Gram-positive bacteria. Also inhibits NADPH oxidase-dependent superoxide production (IC(50) is 0.4 uM on granulocytes stimulated with PMA, IC(50) is 0.51 uM on HL-60 cells undifferentiated and IC(50) is 0.53 uM on HL-60 cells treated with DMSO). The C-terminal peptide shows a higher bradykinin potentiating activity than the complete peptide. This chain is Bradykinin-potentiating peptide BmKbpp, found in Olivierus martensii (Manchurian scorpion).